A 156-amino-acid polypeptide reads, in one-letter code: Succinate dehydrogenase assembly factor 2-B, mitochondrial (156 aa).

The transit peptide at methionine 1 to leucine 24 directs the protein to the mitochondrion.

This sequence belongs to the SDHAF2 family. As to quaternary structure, interacts with the flavoprotein subunit within the SDH catalytic dimer.

The protein localises to the mitochondrion matrix. In terms of biological role, plays an essential role in the assembly of succinate dehydrogenase (SDH), an enzyme complex (also referred to as respiratory complex II) that is a component of both the tricarboxylic acid (TCA) cycle and the mitochondrial electron transport chain, and which couples the oxidation of succinate to fumarate with the reduction of ubiquinone (coenzyme Q) to ubiquinol. Required for flavinylation (covalent attachment of FAD) of the flavoprotein subunit of the SDH catalytic dimer. The sequence is that of Succinate dehydrogenase assembly factor 2-B, mitochondrial from Drosophila melanogaster (Fruit fly).